Reading from the N-terminus, the 1080-residue chain is Putative bifunctional amine oxidase DDB_G0291301 (1080 aa).

A putative sarcosine oxidase region spans residues Met-1–Asn-450. Asp-10 to Ser-40 is a binding site for FAD. Positions Ser-445 to Thr-464 are disordered. Residues Asn-450–Lys-1080 form a putative L-amino-acid oxidase region. A helical membrane pass occupies residues Val-508–Gly-528. FAD contacts are provided by residues Glu-535, Arg-544, and Gly-563–Ala-564. Position 886 (Tyr-886) interacts with substrate. FAD contacts are provided by residues Glu-978 and Val-987–Ser-990.

It in the N-terminal section; belongs to the MSOX/MTOX family. In the C-terminal section; belongs to the flavin monoamine oxidase family. FAD is required as a cofactor.

The protein localises to the membrane. The enzyme catalyses sarcosine + O2 + H2O = formaldehyde + glycine + H2O2. It catalyses the reaction L-pipecolate + O2 = L-1-piperideine-6-carboxylate + H2O2 + H(+). The catalysed reaction is an L-alpha-amino acid + O2 + H2O = a 2-oxocarboxylate + H2O2 + NH4(+). Its function is as follows. Catalyzes an oxidative deamination of predominantly hydrophobic and aromatic L-amino acids. Metabolizes sarcosine, L-pipecolic acid and L-proline. The sequence is that of Putative bifunctional amine oxidase DDB_G0291301 from Dictyostelium discoideum (Social amoeba).